The primary structure comprises 222 residues: N-(5'-phosphoribosyl)anthranilate isomerase (222 aa).

Belongs to the TrpF family.

The enzyme catalyses N-(5-phospho-beta-D-ribosyl)anthranilate = 1-(2-carboxyphenylamino)-1-deoxy-D-ribulose 5-phosphate. Its pathway is amino-acid biosynthesis; L-tryptophan biosynthesis; L-tryptophan from chorismate: step 3/5. This chain is N-(5'-phosphoribosyl)anthranilate isomerase, found in Rhizobium johnstonii (strain DSM 114642 / LMG 32736 / 3841) (Rhizobium leguminosarum bv. viciae).